A 276-amino-acid chain; its full sequence is Merozoite surface protein 2 (276 aa).

An N-terminal signal peptide occupies residues 1–20 (MKVIKTLSIINFFIFVTFNI). N-linked (GlcNAc...) asparagine glycosylation is found at N22 and N36. The segment at 44–202 (AESNPSTGAG…EQTESPELQS (159 aa)) is polymorphic region. The tract at residues 44 to 242 (AESNPSTGAG…CTDGNKENCG (199 aa)) is disordered. The segment covering 51 to 90 (GAGGSGSAGGSGSAGGSGSAGGSGSAGGSGSAGSGDGNGA) has biased composition (gly residues). A run of 5 repeats spans residues 53 to 58 (GGSGSA), 59 to 64 (GGSGSA), 65 to 70 (GGSGSA), 71 to 76 (GGSGSA), and 77 to 82 (GGSGSA). Residues 53-82 (GGSGSAGGSGSAGGSGSAGGSGSAGGSGSA) form a 5 X 6 AA tandem repeats of G-G-S-G-S-A region. The segment covering 91-127 (NPGADAERSPSTPATTTTTTTTNDAEASTSTSSENPN) has biased composition (low complexity). Polar residues-rich tracts occupy residues 143 to 169 (KPNQ…NVPP), 176 to 187 (KSPTAQPEQAEN), and 194 to 204 (QTESPELQSAP). N153 carries an N-linked (GlcNAc...) asparagine glycan. N-linked (GlcNAc...) asparagine glycosylation is present at N225. Residues 229 to 238 (SQKECTDGNK) show a composition bias toward basic and acidic residues. C233 and C241 are oxidised to a cystine. N250 carries N-linked (GlcNAc...) asparagine glycosylation. A lipid anchor (GPI-anchor amidated asparagine) is attached at N250. The propeptide at 251–276 (SSNIASINKFVVLISATLVLSFAIFI) is removed in mature form.

It is found in the cell membrane. Functionally, may play a role in the merozoite attachment to the erythrocyte. The sequence is that of Merozoite surface protein 2 from Plasmodium falciparum (isolate 7G8).